A 148-amino-acid polypeptide reads, in one-letter code: Large ribosomal subunit protein uL13 (148 aa).

It belongs to the universal ribosomal protein uL13 family. Part of the 50S ribosomal subunit.

This protein is one of the early assembly proteins of the 50S ribosomal subunit, although it is not seen to bind rRNA by itself. It is important during the early stages of 50S assembly. In Ureaplasma urealyticum serovar 10 (strain ATCC 33699 / Western), this protein is Large ribosomal subunit protein uL13.